The chain runs to 817 residues: Leucine--tRNA ligase (817 aa).

Positions 42 to 52 (PYPSGRLHMGH) match the 'HIGH' region motif. Residues 576–580 (KMSKS) carry the 'KMSKS' region motif. K579 is an ATP binding site.

This sequence belongs to the class-I aminoacyl-tRNA synthetase family.

The protein localises to the cytoplasm. The catalysed reaction is tRNA(Leu) + L-leucine + ATP = L-leucyl-tRNA(Leu) + AMP + diphosphate. The protein is Leucine--tRNA ligase of Halorhodospira halophila (strain DSM 244 / SL1) (Ectothiorhodospira halophila (strain DSM 244 / SL1)).